Here is a 189-residue protein sequence, read N- to C-terminus: Protein GrpE (189 aa).

The interval 1–22 (MKEQQKETEQNIEEINDETVTE) is disordered. A compositionally biased stretch (acidic residues) spans 10–22 (QNIEEINDETVTE).

The protein belongs to the GrpE family. In terms of assembly, homodimer.

The protein localises to the cytoplasm. Participates actively in the response to hyperosmotic and heat shock by preventing the aggregation of stress-denatured proteins, in association with DnaK and GrpE. It is the nucleotide exchange factor for DnaK and may function as a thermosensor. Unfolded proteins bind initially to DnaJ; upon interaction with the DnaJ-bound protein, DnaK hydrolyzes its bound ATP, resulting in the formation of a stable complex. GrpE releases ADP from DnaK; ATP binding to DnaK triggers the release of the substrate protein, thus completing the reaction cycle. Several rounds of ATP-dependent interactions between DnaJ, DnaK and GrpE are required for fully efficient folding. In Leuconostoc citreum (strain KM20), this protein is Protein GrpE.